The primary structure comprises 68 residues: Copper transport protein ATOX1 (68 aa).

The HMA domain maps to 1–63 (MPKHEFSVDM…TLNKTGKAVS (63 aa)). Cu cation is bound by residues C12 and C15. Position 47 is a phosphoserine (S47). Position 60 is an N6-acetyllysine (K60).

This sequence belongs to the ATX1 family. In terms of assembly, homodimer. Interacts with ATP7B. Interacts with ATP7A. Interacts (via dimer form) with SLC31A1 (via C-terminal domain); this interaction improves ATOX1 stability and controls intracellular Cu(I) levels.

In terms of biological role, binds and deliver cytosolic copper to the copper ATPase proteins. May be important in cellular antioxidant defense. This Rattus norvegicus (Rat) protein is Copper transport protein ATOX1.